The chain runs to 240 residues: Phosphoribosylaminoimidazole-succinocarboxamide synthase (240 aa).

Belongs to the SAICAR synthetase family.

It carries out the reaction 5-amino-1-(5-phospho-D-ribosyl)imidazole-4-carboxylate + L-aspartate + ATP = (2S)-2-[5-amino-1-(5-phospho-beta-D-ribosyl)imidazole-4-carboxamido]succinate + ADP + phosphate + 2 H(+). It functions in the pathway purine metabolism; IMP biosynthesis via de novo pathway; 5-amino-1-(5-phospho-D-ribosyl)imidazole-4-carboxamide from 5-amino-1-(5-phospho-D-ribosyl)imidazole-4-carboxylate: step 1/2. The sequence is that of Phosphoribosylaminoimidazole-succinocarboxamide synthase from Wolbachia sp. subsp. Drosophila simulans (strain wRi).